The following is a 185-amino-acid chain: Crossover junction endodeoxyribonuclease RuvC (185 aa).

Active-site residues include D7, E66, and D137. 3 residues coordinate Mg(2+): D7, E66, and D137.

Belongs to the RuvC family. As to quaternary structure, homodimer which binds Holliday junction (HJ) DNA. The HJ becomes 2-fold symmetrical on binding to RuvC with unstacked arms; it has a different conformation from HJ DNA in complex with RuvA. In the full resolvosome a probable DNA-RuvA(4)-RuvB(12)-RuvC(2) complex forms which resolves the HJ. Mg(2+) serves as cofactor.

Its subcellular location is the cytoplasm. The enzyme catalyses Endonucleolytic cleavage at a junction such as a reciprocal single-stranded crossover between two homologous DNA duplexes (Holliday junction).. The RuvA-RuvB-RuvC complex processes Holliday junction (HJ) DNA during genetic recombination and DNA repair. Endonuclease that resolves HJ intermediates. Cleaves cruciform DNA by making single-stranded nicks across the HJ at symmetrical positions within the homologous arms, yielding a 5'-phosphate and a 3'-hydroxyl group; requires a central core of homology in the junction. The consensus cleavage sequence is 5'-(A/T)TT(C/G)-3'. Cleavage occurs on the 3'-side of the TT dinucleotide at the point of strand exchange. HJ branch migration catalyzed by RuvA-RuvB allows RuvC to scan DNA until it finds its consensus sequence, where it cleaves and resolves the cruciform DNA. In Anaeromyxobacter sp. (strain K), this protein is Crossover junction endodeoxyribonuclease RuvC.